A 491-amino-acid polypeptide reads, in one-letter code: Glutamyl-tRNA(Gln) amidotransferase subunit A (491 aa).

Residues lysine 77 and serine 152 each act as charge relay system in the active site. The active-site Acyl-ester intermediate is serine 176.

This sequence belongs to the amidase family. GatA subfamily. Heterotrimer of A, B and C subunits.

The enzyme catalyses L-glutamyl-tRNA(Gln) + L-glutamine + ATP + H2O = L-glutaminyl-tRNA(Gln) + L-glutamate + ADP + phosphate + H(+). Functionally, allows the formation of correctly charged Gln-tRNA(Gln) through the transamidation of misacylated Glu-tRNA(Gln) in organisms which lack glutaminyl-tRNA synthetase. The reaction takes place in the presence of glutamine and ATP through an activated gamma-phospho-Glu-tRNA(Gln). This is Glutamyl-tRNA(Gln) amidotransferase subunit A from Chlamydia felis (strain Fe/C-56) (Chlamydophila felis).